The primary structure comprises 549 residues: Glucose-6-phosphate isomerase (549 aa).

Glutamate 355 acts as the Proton donor in catalysis. Catalysis depends on residues histidine 386 and lysine 514.

Belongs to the GPI family.

The protein localises to the cytoplasm. The enzyme catalyses alpha-D-glucose 6-phosphate = beta-D-fructose 6-phosphate. Its pathway is carbohydrate biosynthesis; gluconeogenesis. The protein operates within carbohydrate degradation; glycolysis; D-glyceraldehyde 3-phosphate and glycerone phosphate from D-glucose: step 2/4. Functionally, catalyzes the reversible isomerization of glucose-6-phosphate to fructose-6-phosphate. The sequence is that of Glucose-6-phosphate isomerase from Salmonella paratyphi B (strain ATCC BAA-1250 / SPB7).